The sequence spans 194 residues: Holliday junction branch migration complex subunit RuvA (194 aa).

A domain I region spans residues 1 to 64; the sequence is MISSLNGILE…EDALSLFGFA (64 aa). The interval 65 to 143 is domain II; that stretch reads TTEELSLFET…KNWEAGVLSQ (79 aa). Residues 144 to 149 are flexible linker; that stretch reads VTEANS. The interval 149-194 is domain III; sequence SDILATLTALGYSSSEAAKAISSLGDNGDLPLEERIKLALNYFNNK.

It belongs to the RuvA family. Homotetramer. Forms an RuvA(8)-RuvB(12)-Holliday junction (HJ) complex. HJ DNA is sandwiched between 2 RuvA tetramers; dsDNA enters through RuvA and exits via RuvB. An RuvB hexamer assembles on each DNA strand where it exits the tetramer. Each RuvB hexamer is contacted by two RuvA subunits (via domain III) on 2 adjacent RuvB subunits; this complex drives branch migration. In the full resolvosome a probable DNA-RuvA(4)-RuvB(12)-RuvC(2) complex forms which resolves the HJ.

It localises to the cytoplasm. Its function is as follows. The RuvA-RuvB-RuvC complex processes Holliday junction (HJ) DNA during genetic recombination and DNA repair, while the RuvA-RuvB complex plays an important role in the rescue of blocked DNA replication forks via replication fork reversal (RFR). RuvA specifically binds to HJ cruciform DNA, conferring on it an open structure. The RuvB hexamer acts as an ATP-dependent pump, pulling dsDNA into and through the RuvAB complex. HJ branch migration allows RuvC to scan DNA until it finds its consensus sequence, where it cleaves and resolves the cruciform DNA. This chain is Holliday junction branch migration complex subunit RuvA, found in Dehalococcoides mccartyi (strain CBDB1).